Here is a 616-residue protein sequence, read N- to C-terminus: Chaperone protein HscA (616 aa).

Belongs to the heat shock protein 70 family.

In terms of biological role, chaperone involved in the maturation of iron-sulfur cluster-containing proteins. Has a low intrinsic ATPase activity which is markedly stimulated by HscB. Involved in the maturation of IscU. The chain is Chaperone protein HscA from Escherichia coli O17:K52:H18 (strain UMN026 / ExPEC).